We begin with the raw amino-acid sequence, 309 residues long: Nucleoside kinase (309 aa).

3 residues coordinate substrate: Asp16, Gly42, and Asn46. An ATP-binding site is contributed by Gln108. Substrate contacts are provided by residues 110 to 112 (SYF) and Gln166. ATP contacts are provided by residues Asn189 and 217–223 (KTYGKEG). Asp249 is a binding site for substrate. Asp249 serves as the catalytic Proton acceptor.

It belongs to the carbohydrate kinase PfkB family. Homodimer. Mg(2+) is required as a cofactor.

Its function is as follows. Catalyzes the phosphorylation of a wide range of nucleosides to yield nucleoside monophosphates, using ATP, ITP or GTP as phosphate donor. The sequence is that of Nucleoside kinase from Methanothermobacter thermautotrophicus (strain ATCC 29096 / DSM 1053 / JCM 10044 / NBRC 100330 / Delta H) (Methanobacterium thermoautotrophicum).